We begin with the raw amino-acid sequence, 399 residues long: Glycerol-1-phosphate dehydrogenase [NAD(P)+] (399 aa).

NAD(+)-binding positions include Asp-56, 118 to 122 (GTIHD), and 140 to 143 (TAPS). Asp-145 serves as a coordination point for substrate. Ser-149 is a binding site for NAD(+). A substrate-binding site is contributed by Asp-192. Positions 192 and 272 each coordinate Ni(2+). His-276 serves as a coordination point for substrate. His-292 is a binding site for Ni(2+).

This sequence belongs to the glycerol-1-phosphate dehydrogenase family. In terms of assembly, homodimer. Ni(2+) serves as cofactor.

It is found in the cytoplasm. The enzyme catalyses sn-glycerol 1-phosphate + NAD(+) = dihydroxyacetone phosphate + NADH + H(+). The catalysed reaction is sn-glycerol 1-phosphate + NADP(+) = dihydroxyacetone phosphate + NADPH + H(+). In terms of biological role, catalyzes the NAD(P)H-dependent reduction of dihydroxyacetonephosphate (DHAP or glycerone phosphate) to glycerol 1-phosphate (G1P). The G1P thus generated is probably used for the synthesis of phosphoglycerolipids in Gram-positive bacterial species. This is Glycerol-1-phosphate dehydrogenase [NAD(P)+] from Halalkalibacterium halodurans (strain ATCC BAA-125 / DSM 18197 / FERM 7344 / JCM 9153 / C-125) (Bacillus halodurans).